The primary structure comprises 618 residues: Matrix metalloproteinase-24 (618 aa).

The first 41 residues, 1–41 (MPRSRGGRAAPGQASRWSGWRAPGRLLPLLPALCCLAAAAG), serve as a signal peptide directing secretion. Residues 42–128 (AGKPAGADAP…HLSRRRRNKR (87 aa)) constitute a propeptide that is removed on maturation. Over 42 to 575 (AGKPAGADAP…IDDVPGSVNA (534 aa)) the chain is Extracellular. The Cysteine switch motif lies at 110-117 (PRCGVPDH). Zn(2+) is bound by residues cysteine 112 and histidine 255. Residue glutamate 256 is part of the active site. 2 residues coordinate Zn(2+): histidine 259 and histidine 265. Positions 296 to 352 (QKIYGPPAEPLEPTRPLPTLPVRRIHSPSERKHERHPRPPRPPLGDRPSTPGAKPNI) are disordered. Pro residues predominate over residues 302 to 314 (PAEPLEPTRPLPT). 4 Hemopexin repeats span residues 350-398 (PNIC…WKGL), 399-444 (PARI…GSCL), 446-494 (REGI…KGIP), and 495-542 (QAPQ…WMGC). Cysteines 353 and 542 form a disulfide. A helical transmembrane segment spans residues 576–596 (VAVVVPCTLSLCLLVLLYTIF). Over 597–618 (QFKNKAGPQPVTYYKRPVQEWV) the chain is Cytoplasmic. The PDZ-binding signature appears at 616-618 (EWV).

This sequence belongs to the peptidase M10A family. Interacts with GRIP1 and GRIP2. Interacts (via PDZ-binding motif) with APBA3 (via PDZ domain). Zn(2+) serves as cofactor. Requires Ca(2+) as cofactor. Post-translationally, cleaved by a furin endopeptidase in the trans-Golgi network. Mainly expressed in neuronal cells of both central and peripheral nervous systems. Expressed by CGRP-containing peptidergic nociceptors in dorsal root ganglia. Expressed in adult neural stem cell and ependymocytes. Expressed at low level in testis.

The protein resides in the cell membrane. It localises to the golgi apparatus. Its subcellular location is the trans-Golgi network membrane. It is found in the secreted. The protein localises to the extracellular space. The protein resides in the extracellular matrix. In terms of biological role, metalloprotease that mediates cleavage of N-cadherin (CDH2) and acts as a regulator of neuro-immune interactions and neural stem cell quiescence. Involved in cell-cell interactions between nociceptive neurites and mast cells, possibly by mediating cleavage of CDH2, thereby acting as a mediator of peripheral thermal nociception and inflammatory hyperalgesia. Key regulator of neural stem cells quiescence by mediating cleavage of CDH2, affecting CDH2-mediated anchorage of neural stem cells to ependymocytes in the adult subependymal zone, leading to modulate their quiescence. May play a role in axonal growth. Able to activate progelatinase A. May also be a proteoglycanase involved in degradation of proteoglycans, such as dermatan sulfate and chondroitin sulfate proteoglycans. Cleaves partially fibronectin, but not collagen type I, nor laminin. In Mus musculus (Mouse), this protein is Matrix metalloproteinase-24 (Mmp24).